A 206-amino-acid chain; its full sequence is tRNA(Phe) 7-((3-amino-3-carboxypropyl)-4-demethylwyosine(37)-N(4))-methyltransferase 2 (206 aa).

The protein belongs to the TYW3 family.

The catalysed reaction is 4-demethyl-7-[(3S)-3-amino-3-carboxypropyl]wyosine(37) in tRNA(Phe) + S-adenosyl-L-methionine = 7-[(3S)-3-amino-3-carboxypropyl]wyosine(37) in tRNA(Phe) + S-adenosyl-L-homocysteine + H(+). Its function is as follows. S-adenosyl-L-methionine-dependent methyltransferase that acts as a component of the wyosine derivatives biosynthesis pathway. Probably methylates N-4 position of wybutosine-86 to produce wybutosine-72. The polypeptide is tRNA(Phe) 7-((3-amino-3-carboxypropyl)-4-demethylwyosine(37)-N(4))-methyltransferase 2 (Pyrococcus abyssi (strain GE5 / Orsay)).